A 505-amino-acid polypeptide reads, in one-letter code: Lysine--tRNA ligase (505 aa).

The Mg(2+) site is built by Glu415 and Glu422.

This sequence belongs to the class-II aminoacyl-tRNA synthetase family. In terms of assembly, homodimer. The cofactor is Mg(2+).

The protein resides in the cytoplasm. The enzyme catalyses tRNA(Lys) + L-lysine + ATP = L-lysyl-tRNA(Lys) + AMP + diphosphate. This chain is Lysine--tRNA ligase, found in Shigella boydii serotype 4 (strain Sb227).